Reading from the N-terminus, the 694-residue chain is Frizzled-2 (694 aa).

The signal sequence occupies residues 1–22 (MRHNRLKVLILGLVLLLTSCRA). Over 23-315 (DGPLHSADHG…GPFFSNDEKD (293 aa)) the chain is Extracellular. The region spanning 59-180 (DPNLRCEEIT…GDPDNLCMEQ (122 aa)) is the FZ domain. 5 disulfide bridges follow: cysteine 64-cysteine 125, cysteine 72-cysteine 118, cysteine 109-cysteine 147, cysteine 136-cysteine 177, and cysteine 140-cysteine 164. Residue asparagine 78 is glycosylated (N-linked (GlcNAc...) asparagine). Residues 175–253 (NLCMEQPSYT…QGEKASGKEC (79 aa)) form a disordered region. Gly residues predominate over residues 187–224 (GSGGSSGGSGGSGSGSGSGGKRKQGGSGSGGSGAGGSS). N-linked (GlcNAc...) asparagine glycosylation occurs at asparagine 288. Residues 316–336 (FAGLWIALWSGLCFCSTLMTL) traverse the membrane as a helical segment. The Cytoplasmic portion of the chain corresponds to 337–352 (TTFIIDTERFKYPERP). A helical membrane pass occupies residues 353–373 (IVFLSACYFMVAVGYLSRNFL). At 374–397 (QNEEIACDGLLLRESSTGPHSCTL) the chain is on the extracellular side. The chain crosses the membrane as a helical span at residues 398–418 (VFLLTYFFGMASSIWWVILSF). The Cytoplasmic portion of the chain corresponds to 419–439 (TWFLAAGLKWGNEAITKHSQY). A helical membrane pass occupies residues 440–460 (FHLAAWLIPTVQSVAVLLLSA). The Extracellular segment spans residues 461 to 482 (VDGDPILGICYVGNLNPDHLKT). A helical membrane pass occupies residues 483–503 (FVLAPLFVYLVIGTTFLMAGF). The Cytoplasmic portion of the chain corresponds to 504-534 (VSLFRIRSVIKQQGGVGAGVKADKLEKLMIR). A helical membrane pass occupies residues 535-555 (IGIFSVLYTVPATIVIGCYLY). The Extracellular portion of the chain corresponds to 556-584 (EAAYFEDWIKALACPCAQVKGPGKKPLYS). A helical transmembrane segment spans residues 585–605 (VLMLKYFMALAVGITSGVWIW). The Cytoplasmic portion of the chain corresponds to 606–694 (SGKTLESWRR…VLKQPAASHV (89 aa)). A Lys-Thr-X-X-X-Trp motif, mediates interaction with the PDZ domain of Dvl family members motif is present at residues 608–613 (KTLESW). The short motif at 692-694 (SHV) is the PDZ-binding element.

The protein belongs to the G-protein coupled receptor Fz/Smo family. In terms of assembly, interacts with ATP6AP2.

The protein localises to the cell membrane. Receptor for Wnt proteins. Most of frizzled receptors are coupled to the beta-catenin canonical signaling pathway, which leads to the activation of disheveled proteins, inhibition of GSK-3 kinase, nuclear accumulation of beta-catenin and activation of Wnt target genes. A second signaling pathway involving PKC and calcium fluxes has been seen for some family members, but it is not yet clear if it represents a distinct pathway or if it can be integrated in the canonical pathway, as PKC seems to be required for Wnt-mediated inactivation of GSK-3 kinase. Both pathways seem to involve interactions with G-proteins. Required to coordinate the cytoskeletons of epidermal cells to produce a parallel array of cuticular hairs and bristles. This chain is Frizzled-2 (fz2), found in Drosophila melanogaster (Fruit fly).